We begin with the raw amino-acid sequence, 99 residues long: NADH-quinone oxidoreductase subunit K (99 aa).

Helical transmembrane passes span 3 to 23 (ILFS…GILI), 28 to 48 (LIVF…FVAF), and 59 to 79 (IWVF…LAII).

It belongs to the complex I subunit 4L family. In terms of assembly, NDH-1 is composed of 14 different subunits. Subunits NuoA, H, J, K, L, M, N constitute the membrane sector of the complex.

The protein resides in the cell inner membrane. It catalyses the reaction a quinone + NADH + 5 H(+)(in) = a quinol + NAD(+) + 4 H(+)(out). In terms of biological role, NDH-1 shuttles electrons from NADH, via FMN and iron-sulfur (Fe-S) centers, to quinones in the respiratory chain. The immediate electron acceptor for the enzyme in this species is believed to be ubiquinone. Couples the redox reaction to proton translocation (for every two electrons transferred, four hydrogen ions are translocated across the cytoplasmic membrane), and thus conserves the redox energy in a proton gradient. This chain is NADH-quinone oxidoreductase subunit K, found in Protochlamydia amoebophila (strain UWE25).